The primary structure comprises 319 residues: Thioredoxin reductase 1 (319 aa).

FAD-binding positions include serine 11–alanine 14, isoleucine 40–alanine 41, glutamine 45, asparagine 54, valine 87, cysteine 145, aspartate 288, and arginine 295–alanine 297. Cysteine 142 and cysteine 145 are joined by a disulfide. Serine 303 carries the post-translational modification Phosphoserine.

It belongs to the class-II pyridine nucleotide-disulfide oxidoreductase family. Homodimer. FAD serves as cofactor.

The protein resides in the cytoplasm. Its subcellular location is the mitochondrion intermembrane space. It carries out the reaction [thioredoxin]-dithiol + NADP(+) = [thioredoxin]-disulfide + NADPH + H(+). Its function is as follows. Central component in the thioredoxin system. Reduces thioredoxins 1 and 2. This Saccharomyces cerevisiae (strain ATCC 204508 / S288c) (Baker's yeast) protein is Thioredoxin reductase 1 (TRR1).